Consider the following 644-residue polypeptide: DNA mismatch repair protein MutL (644 aa).

A disordered region spans residues 336–356 (KRNINPLNRDDKTKDKSEYQK). Over residues 343–356 (NRDDKTKDKSEYQK) the composition is skewed to basic and acidic residues.

Belongs to the DNA mismatch repair MutL/HexB family.

This protein is involved in the repair of mismatches in DNA. It is required for dam-dependent methyl-directed DNA mismatch repair. May act as a 'molecular matchmaker', a protein that promotes the formation of a stable complex between two or more DNA-binding proteins in an ATP-dependent manner without itself being part of a final effector complex. The polypeptide is DNA mismatch repair protein MutL (Halothermothrix orenii (strain H 168 / OCM 544 / DSM 9562)).